A 160-amino-acid polypeptide reads, in one-letter code: Transcriptional repressor NrdR (160 aa).

A compositionally biased stretch (polar residues) spans 1-11 (MRCPNCNSLDT). A disordered region spans residues 1-20 (MRCPNCNSLDTQVKDSRPTE). A zinc finger spans residues 3 to 34 (CPNCNSLDTQVKDSRPTEDSSVIRRRRVCIAC). An ATP-cone domain is found at 49–139 (LIVIKRNGRR…VYRNFREAKD (91 aa)).

It belongs to the NrdR family. The cofactor is Zn(2+).

Negatively regulates transcription of bacterial ribonucleotide reductase nrd genes and operons by binding to NrdR-boxes. This chain is Transcriptional repressor NrdR, found in Rhodopseudomonas palustris (strain ATCC BAA-98 / CGA009).